Reading from the N-terminus, the 393-residue chain is MAEQQISNLLSMFDASHASQKLEITVQMMDTYHYRETPPDSSSSEGGSLSRYDERRVSLPLSHNAASPDIVSQLCFSTAMSSELNHRWKSQRLKVADSPYNYILTLPSKGIRGAFIDSLNVWLEVPEDETSVIKEVIGMLHNSSLIIDDFQDNSPLRRGKPSTHTVFGPAQAINTATYVIVKAIEKIQDIVGHDALADVTGTITTIFQGQAMDLWWTANAIVPSIQEYLLMVNDKTGALFRLSLELLALNSEASISDSALESLSSAVSLLGQYFQIRDDYMNLIDNKYTDQKGFCEDLDEGKYSLTLIHALQTDSSDLLTNILSMRRVQGKLTAQQKMLVLEVMKTNGSLDWTSKLLGMLHTRVVAEIESLEVSTKRDNHALRALVERLKLET.

Positions 109, 112, and 141 each coordinate isopentenyl diphosphate. The Mg(2+) site is built by Asp-148 and Asp-152. A dimethylallyl diphosphate-binding site is contributed by Arg-157. Arg-158 is an isopentenyl diphosphate binding site. Lys-235, Thr-236, and Gln-275 together coordinate dimethylallyl diphosphate. Residue Asp-278 participates in Mg(2+) binding. Dimethylallyl diphosphate-binding residues include Asn-282, Lys-292, and Lys-302.

It belongs to the FPP/GGPP synthase family. The cofactor is Mg(2+).

The enzyme catalyses isopentenyl diphosphate + dimethylallyl diphosphate = (2E)-geranyl diphosphate + diphosphate. The catalysed reaction is isopentenyl diphosphate + (2E)-geranyl diphosphate = (2E,6E)-farnesyl diphosphate + diphosphate. It catalyses the reaction isopentenyl diphosphate + (2E,6E)-farnesyl diphosphate = (2E,6E,10E)-geranylgeranyl diphosphate + diphosphate. It functions in the pathway plant hormone biosynthesis; gibberellin biosynthesis. Its function is as follows. Geranylgeranyl pyrophosphate synthase; part of the gene cluster that mediates the biosynthesis of gibberellins (GAs), diterpenoids that may provide a selective advantage during infection of the preferred host plant, rice. Gibberellins (GAs) are diterpenoids and are synthesized via the mevalonate pathway. Biosynthesis of the major metabolite GA3 (gibberellic acid) from geranylgeranyl diphosphate (GGPP) requires 13 steps. The GGPP produced by the geranylgeranyl diphosphate synthase GGS2 is converted to ent-kaurene via ent-copalyldiphosphate in a two-step cyclization reaction performed by the bifunctional ent-copalyl diphosphate synthase/ent-kaurene synthase enzyme (CPS/KS). Ent-Kaurene is metabolized to GAs by a series of oxidation reactions catalyzed by cytochrome P450 monooxygenases. Cytochrome P450 monooxygenase P450-4 is an ent-kaurene oxidase that catalyzes the three oxidation steps between ent-kaurene and ent-kaurenoic acid. The highly multifunctional cytochrome P450 monooxygenase P450-1 then catalyzes four steps involving oxidation at two carbon atoms, in the main pathway from ent-kaurenoic acid to GA14 via GA12-aldehyde as well as producing kaurenolides and fujenoic acids as by-products. The cytochrome P450 monooxygenase P450-2 then converts GA14 to GA4 by removal of C-20. GA4 is further converted to GA7 by the GA4 desaturase DES via 1,2-desaturation before cytochrome P450 monooxygenase P450-3, a 13-hydroxylase, hydroxylates GA7 to GA3, the final product of the GA-biosynthetic pathway. This chain is Geranylgeranyl pyrophosphate synthase 2, found in Gibberella fujikuroi (strain CBS 195.34 / IMI 58289 / NRRL A-6831) (Bakanae and foot rot disease fungus).